A 272-amino-acid polypeptide reads, in one-letter code: NAD kinase (272 aa).

D62 acts as the Proton acceptor in catalysis. Residues 62–63 (DG), R67, 129–130 (NE), R140, K157, D159, I167, 170–175 (SSYSSS), A194, and Q229 contribute to the NAD(+) site.

This sequence belongs to the NAD kinase family. Requires a divalent metal cation as cofactor.

Its subcellular location is the cytoplasm. The enzyme catalyses NAD(+) + ATP = ADP + NADP(+) + H(+). Its function is as follows. Involved in the regulation of the intracellular balance of NAD and NADP, and is a key enzyme in the biosynthesis of NADP. Catalyzes specifically the phosphorylation on 2'-hydroxyl of the adenosine moiety of NAD to yield NADP. This chain is NAD kinase, found in Thermoplasma acidophilum (strain ATCC 25905 / DSM 1728 / JCM 9062 / NBRC 15155 / AMRC-C165).